A 425-amino-acid polypeptide reads, in one-letter code: Glutamyl-tRNA reductase (425 aa).

Substrate-binding positions include 47–50, Ser107, 112–114, and Gln118; these read TCNR and EDQ. Cys48 serves as the catalytic Nucleophile. Residue 187 to 192 participates in NADP(+) binding; that stretch reads GAGHMA.

The protein belongs to the glutamyl-tRNA reductase family. Homodimer.

The enzyme catalyses (S)-4-amino-5-oxopentanoate + tRNA(Glu) + NADP(+) = L-glutamyl-tRNA(Glu) + NADPH + H(+). Its pathway is porphyrin-containing compound metabolism; protoporphyrin-IX biosynthesis; 5-aminolevulinate from L-glutamyl-tRNA(Glu): step 1/2. The protein operates within porphyrin-containing compound metabolism; chlorophyll biosynthesis. In terms of biological role, catalyzes the NADPH-dependent reduction of glutamyl-tRNA(Glu) to glutamate 1-semialdehyde (GSA). This chain is Glutamyl-tRNA reductase, found in Roseiflexus castenholzii (strain DSM 13941 / HLO8).